Consider the following 468-residue polypeptide: Uronate isomerase (468 aa).

Belongs to the metallo-dependent hydrolases superfamily. Uronate isomerase family.

It catalyses the reaction D-glucuronate = D-fructuronate. The catalysed reaction is aldehydo-D-galacturonate = keto-D-tagaturonate. It participates in carbohydrate metabolism; pentose and glucuronate interconversion. This Brachyspira hyodysenteriae (strain ATCC 49526 / WA1) protein is Uronate isomerase.